Consider the following 250-residue polypeptide: Putative HTH-type transcriptional regulatory protein PAE1627 (250 aa).

The 55-residue stretch at 129-183 (LRAKRQQAGLSLGTLATNLGVTRETVYRYERGEIEAPLKIAEKLINMFGEDITKK) folds into the HTH cro/C1-type domain. Residues 140–159 (LGTLATNLGVTRETVYRYER) constitute a DNA-binding region (H-T-H motif).

The sequence is that of Putative HTH-type transcriptional regulatory protein PAE1627 from Pyrobaculum aerophilum (strain ATCC 51768 / DSM 7523 / JCM 9630 / CIP 104966 / NBRC 100827 / IM2).